The sequence spans 449 residues: Omega-amino acid--pyruvate aminotransferase (449 aa).

Substrate is bound at residue tryptophan 60. A pyridoxal 5'-phosphate-binding site is contributed by 119–120 (GS). Lysine 288 is subject to N6-(pyridoxal phosphate)lysine. Threonine 327 serves as a coordination point for pyridoxal 5'-phosphate. Positions 414 and 421 each coordinate substrate.

Belongs to the class-III pyridoxal-phosphate-dependent aminotransferase family. Homotetramer. It depends on pyridoxal 5'-phosphate as a cofactor.

The enzyme catalyses 3-oxopropanoate + L-alanine = beta-alanine + pyruvate. In terms of biological role, catalyzes transamination between a variety of omega-amino acids, mono and diamines, and pyruvate. Plays a pivotal role in the metabolism of the omega amino acids. In Pseudomonas putida (Arthrobacter siderocapsulatus), this protein is Omega-amino acid--pyruvate aminotransferase.